The sequence spans 460 residues: UDP-N-acetylmuramoylalanine--D-glutamate ligase (460 aa).

ATP is bound at residue 120 to 126; the sequence is GSNGKTT.

This sequence belongs to the MurCDEF family.

It is found in the cytoplasm. The catalysed reaction is UDP-N-acetyl-alpha-D-muramoyl-L-alanine + D-glutamate + ATP = UDP-N-acetyl-alpha-D-muramoyl-L-alanyl-D-glutamate + ADP + phosphate + H(+). It functions in the pathway cell wall biogenesis; peptidoglycan biosynthesis. Cell wall formation. Catalyzes the addition of glutamate to the nucleotide precursor UDP-N-acetylmuramoyl-L-alanine (UMA). This chain is UDP-N-acetylmuramoylalanine--D-glutamate ligase, found in Lactobacillus delbrueckii subsp. bulgaricus (strain ATCC 11842 / DSM 20081 / BCRC 10696 / JCM 1002 / NBRC 13953 / NCIMB 11778 / NCTC 12712 / WDCM 00102 / Lb 14).